The chain runs to 427 residues: Enolase (427 aa).

Position 163 (Gln163) interacts with (2R)-2-phosphoglycerate. The active-site Proton donor is Glu205. Mg(2+) contacts are provided by Asp242, Glu285, and Asp312. Positions 337, 366, 367, and 388 each coordinate (2R)-2-phosphoglycerate. Lys337 functions as the Proton acceptor in the catalytic mechanism.

This sequence belongs to the enolase family. Mg(2+) serves as cofactor.

It is found in the cytoplasm. Its subcellular location is the secreted. The protein localises to the cell surface. The catalysed reaction is (2R)-2-phosphoglycerate = phosphoenolpyruvate + H2O. The protein operates within carbohydrate degradation; glycolysis; pyruvate from D-glyceraldehyde 3-phosphate: step 4/5. In terms of biological role, catalyzes the reversible conversion of 2-phosphoglycerate (2-PG) into phosphoenolpyruvate (PEP). It is essential for the degradation of carbohydrates via glycolysis. The protein is Enolase of Beijerinckia indica subsp. indica (strain ATCC 9039 / DSM 1715 / NCIMB 8712).